The chain runs to 154 residues: MIGYLFGNRVLVDDKELPLIEAYYLLDKGELEVYEDDKKLSKEEFLKKCLTYDERFLIRYKAYKELRDKGYTLGTALKFGADFRVYDIGVIPKKGKRSEREHSKWVLYPVSKDETFDFYEFASKNRVAHSTRKKLLLGIVSDKIEFIEVSWKKP.

Active-site residues include tyrosine 86, histidine 102, and lysine 133.

It belongs to the tRNA-intron endonuclease family. Archaeal short subfamily. In terms of assembly, homotetramer; although the tetramer contains four active sites, only two participate in the cleavage. Therefore, it should be considered as a dimer of dimers.

It carries out the reaction pretRNA = a 3'-half-tRNA molecule with a 5'-OH end + a 5'-half-tRNA molecule with a 2',3'-cyclic phosphate end + an intron with a 2',3'-cyclic phosphate and a 5'-hydroxyl terminus.. Endonuclease that removes tRNA introns. Cleaves pre-tRNA at the 5'- and 3'-splice sites to release the intron. The products are an intron and two tRNA half-molecules bearing 2',3' cyclic phosphate and 5'-OH termini. Recognizes a pseudosymmetric substrate in which 2 bulged loops of 3 bases are separated by a stem of 4 bp. This Nanoarchaeum equitans (strain Kin4-M) protein is tRNA-splicing endonuclease.